We begin with the raw amino-acid sequence, 307 residues long: Acyl transferase (307 aa).

Active-site charge relay system residues include Ser-116, Asp-213, and His-243.

This sequence belongs to the LuxD family.

Its pathway is lipid metabolism; fatty acid reduction for biolumincescence. In terms of biological role, acyl transferase is part of the fatty acid reductase system required for aldehyde biosynthesis; it produces fatty acids for the luminescent reaction. The chain is Acyl transferase from Photorhabdus luminescens (Xenorhabdus luminescens).